The chain runs to 466 residues: Chromosomal replication initiator protein DnaA (466 aa).

The interval 1-86 is domain I, interacts with DnaA modulators; the sequence is MSLSLWQQCL…EVGTKPVTQT (86 aa). Residues 86-129 form a domain II region; the sequence is TLKTPVHNVVAPTQTTTAQPQRVAPAARSGWDNVPAPAEPTYRS. The domain III, AAA+ region stretch occupies residues 130–346; the sequence is NVNVKHTFDN…GALNRVIANA (217 aa). ATP contacts are provided by Gly-174, Gly-176, Lys-177, and Thr-178. Residues 347–466 are domain IV, binds dsDNA; it reads NFTGRAITID…FSNLIRTLSS (120 aa).

Belongs to the DnaA family. In terms of assembly, oligomerizes as a right-handed, spiral filament on DNA at oriC.

Its subcellular location is the cytoplasm. Plays an essential role in the initiation and regulation of chromosomal replication. ATP-DnaA binds to the origin of replication (oriC) to initiate formation of the DNA replication initiation complex once per cell cycle. Binds the DnaA box (a 9 base pair repeat at the origin) and separates the double-stranded (ds)DNA. Forms a right-handed helical filament on oriC DNA; dsDNA binds to the exterior of the filament while single-stranded (ss)DNA is stabiized in the filament's interior. The ATP-DnaA-oriC complex binds and stabilizes one strand of the AT-rich DNA unwinding element (DUE), permitting loading of DNA polymerase. After initiation quickly degrades to an ADP-DnaA complex that is not apt for DNA replication. Binds acidic phospholipids. In Salmonella enteritidis PT4 (strain P125109), this protein is Chromosomal replication initiator protein DnaA.